We begin with the raw amino-acid sequence, 307 residues long: UDP-3-O-acyl-N-acetylglucosamine deacetylase (307 aa).

Positions 78, 237, and 241 each coordinate Zn(2+). The active-site Proton donor is His-264.

This sequence belongs to the LpxC family. It depends on Zn(2+) as a cofactor.

The enzyme catalyses a UDP-3-O-[(3R)-3-hydroxyacyl]-N-acetyl-alpha-D-glucosamine + H2O = a UDP-3-O-[(3R)-3-hydroxyacyl]-alpha-D-glucosamine + acetate. It participates in glycolipid biosynthesis; lipid IV(A) biosynthesis; lipid IV(A) from (3R)-3-hydroxytetradecanoyl-[acyl-carrier-protein] and UDP-N-acetyl-alpha-D-glucosamine: step 2/6. Functionally, catalyzes the hydrolysis of UDP-3-O-myristoyl-N-acetylglucosamine to form UDP-3-O-myristoylglucosamine and acetate, the committed step in lipid A biosynthesis. The protein is UDP-3-O-acyl-N-acetylglucosamine deacetylase of Azoarcus sp. (strain BH72).